The chain runs to 413 residues: 26S proteasome regulatory subunit 6B homolog (413 aa).

The tract at residues 1–30 is disordered; the sequence is MATAMVLDPKPAEKLPATRPETSITDVPSD. A coiled-coil region spans residues 32-80; the sequence is EDDLYARLKSLQRQLEFIEIQEEYVKDELKNLRREHLRAQEEVKRIQSV. 201-208 is an ATP binding site; that stretch reads GPPGTGKT.

This sequence belongs to the AAA ATPase family.

It localises to the cytoplasm. The protein resides in the nucleus. In terms of biological role, the 26S proteasome is involved in the ATP-dependent degradation of ubiquitinated proteins. The regulatory (or ATPase) complex confers ATP dependency and substrate specificity to the 26S complex. This Solanum tuberosum (Potato) protein is 26S proteasome regulatory subunit 6B homolog.